The primary structure comprises 660 residues: WD repeat-containing protein 48 homolog (660 aa).

WD repeat units lie at residues 23 to 78, 84 to 120, 123 to 162, 174 to 213, 216 to 255, 258 to 297, 300 to 341, and 362 to 401; these read MHRS…RDLH, HHTD…CMST, THRD…KLTA, GNKD…KLMK, GHTD…CISS, CHSE…TAQL, IEDA…ISVE, and PGAA…KVCD.

The protein belongs to the WD repeat WDR48 family.

Functionally, regulator of deubiquitinating complexes. Activates deubiquitination by increasing the catalytic turnover without increasing the affinity of deubiquitinating enzymes for the substrate. This chain is WD repeat-containing protein 48 homolog, found in Brugia malayi (Filarial nematode worm).